Reading from the N-terminus, the 176-residue chain is NAD(P)H-quinone oxidoreductase subunit J (176 aa).

It belongs to the complex I 30 kDa subunit family. NDH-1 can be composed of about 15 different subunits; different subcomplexes with different compositions have been identified which probably have different functions.

It is found in the cellular thylakoid membrane. It catalyses the reaction a plastoquinone + NADH + (n+1) H(+)(in) = a plastoquinol + NAD(+) + n H(+)(out). The enzyme catalyses a plastoquinone + NADPH + (n+1) H(+)(in) = a plastoquinol + NADP(+) + n H(+)(out). Functionally, NDH-1 shuttles electrons from an unknown electron donor, via FMN and iron-sulfur (Fe-S) centers, to quinones in the respiratory and/or the photosynthetic chain. The immediate electron acceptor for the enzyme in this species is believed to be plastoquinone. Couples the redox reaction to proton translocation, and thus conserves the redox energy in a proton gradient. Cyanobacterial NDH-1 also plays a role in inorganic carbon-concentration. The sequence is that of NAD(P)H-quinone oxidoreductase subunit J from Prochlorococcus marinus (strain MIT 9515).